Reading from the N-terminus, the 132-residue chain is MKSCEIGQQGESAAALFLYNKGMSILERNWRKGRFEIDLVCQDIKTLVFVEVRTRKAKGMLLPEQTLTISKRCNIIHSAQLYLMDKKDWSMPCRFDVICIISKKTTLELEHYKNVFEFYEIMDSSNTSWQPW.

This sequence belongs to the UPF0102 family.

The chain is UPF0102 protein LI0223 from Lawsonia intracellularis (strain PHE/MN1-00).